The chain runs to 153 residues: Actin-related protein 2/3 complex subunit 5-like protein (153 aa).

At S64 the chain carries Phosphoserine.

It belongs to the ARPC5 family. As to quaternary structure, may be a component of the Arp2/3 complex in which it may replace ARPC5.

It localises to the cytoplasm. Its subcellular location is the cytoskeleton. Its function is as follows. May function as component of the Arp2/3 complex which is involved in regulation of actin polymerization and together with an activating nucleation-promoting factor (NPF) mediates the formation of branched actin networks. This chain is Actin-related protein 2/3 complex subunit 5-like protein (Arpc5l), found in Mus musculus (Mouse).